The following is a 2017-amino-acid chain: Rootletin (2017 aa).

Coiled-coil stretches lie at residues 70–262 (ATEM…KVTN) and 318–444 (ERDL…LETE). The span at 464-483 (SESGVQLSGSERTADASNGS) shows a compositional bias: polar residues. The segment at 464 to 518 (SESGVQLSGSERTADASNGSLRGLSGQRTPSPPRRSSPGRGRSPRRGPSPACSDS) is disordered. The span at 499-513 (SSPGRGRSPRRGPSP) shows a compositional bias: low complexity. 2 coiled-coil regions span residues 546 to 1058 (QDLL…LAES) and 1091 to 1438 (EMER…GLRS). Disordered regions lie at residues 1184-1226 (LRES…RSAV) and 1443-1575 (GLGL…GRLS). 7 positions are modified to phosphoserine: Ser1460, Ser1470, Ser1476, Ser1483, Ser1486, Ser1490, and Ser1496. Residues 1505 to 1704 (EAVRGALREF…DSEVKAGTLQ (200 aa)) adopt a coiled-coil conformation. The span at 1510 to 1529 (ALREFLQELRSAQRERDELR) shows a compositional bias: basic and acidic residues. 2 positions are modified to phosphoserine: Ser1575 and Ser1660. Residues 1962–2017 (RSAQAQTERTLEARERAHRQRVRGLEEQVSTLKGQLQQELRRSSAPFSPPSGPPEK) form a disordered region. A compositionally biased stretch (polar residues) spans 1989–1999 (QVSTLKGQLQQ). Positions 2008–2017 (FSPPSGPPEK) are enriched in pro residues.

It belongs to the rootletin family. As to quaternary structure, homomer. Interacts with KLC3, NEK2 and the N-terminus of CEP250. Interacts with CEP44. Interacts with CCDC102B (via N-terminus). Phosphorylated by NEK2 which may regulate its association with centrosomes.

The protein resides in the cytoplasm. Its subcellular location is the cytoskeleton. It localises to the microtubule organizing center. It is found in the centrosome. The protein localises to the centriole. The protein resides in the cilium basal body. Major structural component of the ciliary rootlet, a cytoskeletal-like structure in ciliated cells which originates from the basal body at the proximal end of a cilium and extends proximally toward the cell nucleus. Furthermore, is required for the correct positioning of the cilium basal body relative to the cell nucleus, to allow for ciliogenesis. Contributes to centrosome cohesion before mitosis. The protein is Rootletin of Homo sapiens (Human).